Here is a 466-residue protein sequence, read N- to C-terminus: Asparagine--tRNA ligase (466 aa).

The protein belongs to the class-II aminoacyl-tRNA synthetase family. Homodimer.

Its subcellular location is the cytoplasm. It catalyses the reaction tRNA(Asn) + L-asparagine + ATP = L-asparaginyl-tRNA(Asn) + AMP + diphosphate + H(+). This Sodalis glossinidius (strain morsitans) protein is Asparagine--tRNA ligase.